The primary structure comprises 514 residues: CUGBP Elav-like family member 2 (514 aa).

RRM domains follow at residues 44–127 (IKMF…PADS), 136–216 (RKLF…FADT), and 429–507 (ANLF…LKRS).

The protein belongs to the CELF/BRUNOL family.

The protein localises to the nucleus. It localises to the cytoplasm. In terms of biological role, RNA-binding protein implicated in the regulation of several post-transcriptional events. May be involved in pre-mRNA alternative splicing, mRNA translation repression and stability. The polypeptide is CUGBP Elav-like family member 2 (celf2) (Danio rerio (Zebrafish)).